Reading from the N-terminus, the 117-residue chain is Iron-sulfur cluster insertion protein ErpA (117 aa).

Cys-45, Cys-109, and Cys-111 together coordinate iron-sulfur cluster.

Belongs to the HesB/IscA family. Homodimer. It depends on iron-sulfur cluster as a cofactor.

Required for insertion of 4Fe-4S clusters for at least IspG. This is Iron-sulfur cluster insertion protein ErpA from Chromohalobacter salexigens (strain ATCC BAA-138 / DSM 3043 / CIP 106854 / NCIMB 13768 / 1H11).